The chain runs to 810 residues: Plasminogen (810 aa).

The first 19 residues, 1–19, serve as a signal peptide directing secretion; sequence MEHKEVVLLLLLFLKSGQG. The region spanning 20 to 98 is the PAN domain; the sequence is EPLDDYVNTK…RDVVLFEKKV (79 aa). Disulfide bonds link cysteine 49-cysteine 73, cysteine 53-cysteine 61, cysteine 103-cysteine 181, cysteine 124-cysteine 164, cysteine 152-cysteine 176, cysteine 185-cysteine 262, cysteine 188-cysteine 316, cysteine 206-cysteine 245, cysteine 234-cysteine 257, cysteine 275-cysteine 352, cysteine 296-cysteine 335, and cysteine 324-cysteine 347. 3 consecutive Kringle domains span residues 103–181, 184–262, and 275–352; these read CKTG…IPEC, ECMH…IPRC, and CLKG…IPSC. A compositionally biased stretch (polar residues) spans 125–141; sequence QKWSSTSPHRPTFSPAT. The tract at residues 125–145 is disordered; it reads QKWSSTSPHRPTFSPATHPSE. Positions 136, 158, and 172 each coordinate L-lysine. The O-linked (GalNAc...) threonine glycan is linked to threonine 365. 9 cysteine pairs are disulfide-bonded: cysteine 377–cysteine 454, cysteine 398–cysteine 437, cysteine 426–cysteine 449, cysteine 481–cysteine 560, cysteine 502–cysteine 543, cysteine 531–cysteine 555, cysteine 567–cysteine 685, cysteine 577–cysteine 585, and cysteine 607–cysteine 623. 2 Kringle domains span residues 377–454 and 481–560; these read CYHG…LKKC and CMFG…VPQC. L-lysine-binding residues include aspartate 432 and arginine 445. Residues 581-808 form the Peptidase S1 domain; sequence VVGGCVAYPH…FVTWIEGVMR (228 aa). Serine 597 carries the post-translational modification Phosphoserine. Catalysis depends on charge relay system residues histidine 622 and aspartate 665. Residue serine 688 is modified to Phosphoserine. Intrachain disulfides connect cysteine 699–cysteine 766, cysteine 729–cysteine 745, and cysteine 756–cysteine 784. Serine 760 acts as the Charge relay system in catalysis.

The protein belongs to the peptidase S1 family. Plasminogen subfamily. In terms of assembly, interacts with CSPG4 and AMOT. Interacts (via the Kringle domains) with HRG; the interaction tethers PLG to the cell surface and enhances its activation. Interacts (via Kringle 4 domain) with ADA; the interaction stimulates PLG activation when in complex with DPP4. Angiostatin: Interacts with ATP5F1A; the interaction inhibits most of the angiogenic effects of angiostatin. In the presence of the inhibitor, the activation involves only cleavage after Arg-580, yielding two chains held together by two disulfide bonds. In the absence of the inhibitor, the activation involves additionally the removal of the activation peptide.

The protein localises to the secreted. The enzyme catalyses Preferential cleavage: Lys-|-Xaa &gt; Arg-|-Xaa, higher selectivity than trypsin. Converts fibrin into soluble products.. With respect to regulation, converted into plasmin by plasminogen activators, both plasminogen and its activator being bound to fibrin. Activated with catalytic amounts of streptokinase. Its function is as follows. Plasmin dissolves the fibrin of blood clots and acts as a proteolytic factor in a variety of other processes including embryonic development, tissue remodeling, tumor invasion, and inflammation. In ovulation, weakens the walls of the Graafian follicle. It activates the urokinase-type plasminogen activator, collagenases and several complement zymogens, such as C1, C4 and C5. Cleavage of fibronectin and laminin leads to cell detachment and apoptosis. Also cleaves fibrin, thrombospondin and von Willebrand factor. Its role in tissue remodeling and tumor invasion may be modulated by CSPG4. Binds to cells. In Macaca mulatta (Rhesus macaque), this protein is Plasminogen (PLG).